A 360-amino-acid chain; its full sequence is Protein phosphatase 1L (360 aa).

Topologically, residues 1–25 (MIEDTMTLLSLLGRIMRYFLLRPET) are extracellular. The helical transmembrane segment at 26-42 (LFLLCISLALWSYFFHT) threads the bilayer. The Cytoplasmic segment spans residues 43-360 (DEVKTIVKSS…FRNSSKTEEQ (318 aa)). The PPM-type phosphatase domain occupies 92–351 (NVAVYSIQGR…DNITVMVVKF (260 aa)). Mn(2+) is bound by residues aspartate 128, glycine 129, aspartate 302, and aspartate 342.

It belongs to the PP2C family. Interacts with MAP3K7/TAK1 and MAP3K5. It depends on Mg(2+) as a cofactor. Mn(2+) serves as cofactor.

It localises to the membrane. The catalysed reaction is O-phospho-L-seryl-[protein] + H2O = L-seryl-[protein] + phosphate. It catalyses the reaction O-phospho-L-threonyl-[protein] + H2O = L-threonyl-[protein] + phosphate. In terms of biological role, acts as a suppressor of the SAPK signaling pathways by associating with and dephosphorylating MAP3K7/TAK1 and MAP3K5, and by attenuating the association between MAP3K7/TAK1 and MAP2K4 or MAP2K6. The protein is Protein phosphatase 1L (PPM1L) of Bos taurus (Bovine).